We begin with the raw amino-acid sequence, 540 residues long: Raucaffricine-O-beta-D-glucosidase (540 aa).

A beta-D-glucoside contacts are provided by residues Gln36, His140, and 185-186 (NE). Catalysis depends on Glu186, which acts as the Proton donor. An intrachain disulfide couples Cys221 to Cys230. Residues Tyr347, Glu420, Trp469, 476–477 (EW), and Phe485 each bind a beta-D-glucoside. Catalysis depends on Glu420, which acts as the Nucleophile.

This sequence belongs to the glycosyl hydrolase 1 family.

The enzyme catalyses raucaffricine + H2O = vomilenine + D-glucose. It carries out the reaction vomilenine + UDP-alpha-D-glucose = raucaffricine + UDP + H(+). Its function is as follows. Glucosidase specifically involved in alkaloid biosynthesis leading to the accumulation of several alkaloids, including ajmaline, an important plant-derived pharmaceutical used in the treatment of heart disorders. The chain is Raucaffricine-O-beta-D-glucosidase from Rauvolfia serpentina (Serpentine wood).